Reading from the N-terminus, the 300-residue chain is Urease accessory protein UreD (300 aa).

This sequence belongs to the UreD family. As to quaternary structure, ureD, UreF and UreG form a complex that acts as a GTP-hydrolysis-dependent molecular chaperone, activating the urease apoprotein by helping to assemble the nickel containing metallocenter of UreC. The UreE protein probably delivers the nickel.

The protein localises to the cytoplasm. In terms of biological role, required for maturation of urease via the functional incorporation of the urease nickel metallocenter. In Prochlorococcus marinus (strain MIT 9215), this protein is Urease accessory protein UreD.